Here is a 304-residue protein sequence, read N- to C-terminus: Coenzyme PQQ synthesis protein B (304 aa).

The protein belongs to the PqqB family.

It functions in the pathway cofactor biosynthesis; pyrroloquinoline quinone biosynthesis. May be involved in the transport of PQQ or its precursor to the periplasm. This is Coenzyme PQQ synthesis protein B from Pseudomonas aeruginosa (strain LESB58).